The primary structure comprises 459 residues: Transcriptional coactivator YAP1-A (459 aa).

Low complexity predominate over residues 1-13 (MEPGSQQQPSAPA). The tract at residues 1–22 (MEPGSQQQPSAPAQQPPPVGHQ) is disordered. Residues Ser-30, Ser-80, Ser-98, and Ser-134 each carry the phosphoserine; by LATS1 and LATS2 modification. 2 disordered regions span residues 65–99 (FKQP…AHSS) and 126–145 (SAPH…PLPP). 2 WW domains span residues 141–174 (VPLP…DPRK) and 199–232 (GPLP…DPRL). Residues 246–268 (NAPVKAPPALPPPSPQTGVLGSG) are disordered. The span at 250–260 (KAPPALPPPSP) shows a compositional bias: pro residues. Residues 261 to 459 (QTGVLGSGGN…LDKESFLTWL (199 aa)) form a transactivation domain region. Residues 269 to 297 (GNQQMRLQQLQMEKERLRLKHQELLRQVR) adopt a coiled-coil conformation. Residues 344-363 (GTYHSRDESTESGLSMSSYS) are disordered. Residues 354–363 (ESGLSMSSYS) are compositionally biased toward polar residues.

This sequence belongs to the YAP1 family. In terms of assembly, interacts with tead1. Phosphorylated by lats1 and lats2; leading to cytoplasmic translocation and inactivation.

It localises to the cytoplasm. Its subcellular location is the nucleus. The protein localises to the cell junction. It is found in the tight junction. The protein resides in the cell membrane. Its function is as follows. Transcriptional regulator which can act both as a coactivator and a corepressor and is the critical downstream regulatory target in the Hippo signaling pathway that plays a pivotal role in organ size control and tumor suppression by restricting proliferation and promoting apoptosis. Plays a key role in tissue tension and 3D tissue shape by regulating cortical actomyosin network formation. Required for expansion of the neural plate and neural plate border zone progenitor pools. Acts as a direct regulator of pax3 expression via interaction with tead1. The protein is Transcriptional coactivator YAP1-A of Xenopus laevis (African clawed frog).